The primary structure comprises 88 residues: Putative membrane protein insertion efficiency factor (88 aa).

The interval 67–88 is disordered; it reads LNAGGYDPVPPKSDNHSKENKK. The span at 79–88 shows a compositional bias: basic and acidic residues; that stretch reads SDNHSKENKK.

It belongs to the UPF0161 family.

It localises to the cell inner membrane. Could be involved in insertion of integral membrane proteins into the membrane. This Actinobacillus succinogenes (strain ATCC 55618 / DSM 22257 / CCUG 43843 / 130Z) protein is Putative membrane protein insertion efficiency factor.